The following is a 470-amino-acid chain: MAEDKIEAYNKSITRTKYFKMDDAINSPICSKTVFIIANERITKENRIGRYYTVFPSFKKFLKKRDSYPQCHEIIIDHINNKTNIAGRLVFDFDIKITDSSILKDTGLIDKNDNQPIMFNSKTLSITKIPLNFKQQIENTIIETIDQYFHDIDKTILEFIWSTSQNPNKFSKHLTVKNLYFDDWITMSKLFYKLFCKVWDNQYYWISSKDLVDSQIVRNKGSLRMVGSTKINGYPLVFDNKNHTLPDSLIRIYFRNHREKEQLVTRNNINKDIINQFLESNDDIEHHRSIDIIDRHFTKIRNPSYDPIIYQKAFEIYDAIHPNIFKMGKVNGKYLTLIRLKPHTCFLSNKFHEQENAYLYISMSDTTYKISFGCYRFCSKKKMEYLGSLIQGNLMKNSPYIDDTDGTTKKHDFNINIKFLSDSDDESINAPNNIKSLESIKSSKSKKQLKSSKSKKPIKHTKTKNIYVET.

Positions 439–470 (SIKSSKSKKQLKSSKSKKPIKHTKTKNIYVET) are disordered. Residues 443–463 (SKSKKQLKSSKSKKPIKHTKT) show a composition bias toward basic residues.

This is an uncharacterized protein from Acanthamoeba polyphaga mimivirus (APMV).